Consider the following 164-residue polypeptide: Large ribosomal subunit protein bL19 (164 aa).

Residues 144–164 (EAEKQTEVQAEPKIEKSEEKK) are disordered.

It belongs to the bacterial ribosomal protein bL19 family.

Functionally, this protein is located at the 30S-50S ribosomal subunit interface and may play a role in the structure and function of the aminoacyl-tRNA binding site. In Pelagibacter ubique (strain HTCC1062), this protein is Large ribosomal subunit protein bL19.